The primary structure comprises 636 residues: NADP-dependent malic enzyme, chloroplastic (636 aa).

The segment at 1 to 28 (MLSTRTAAVAASASPASPWKLGGRSEGG) is disordered. The N-terminal 62 residues, 1–62 (MLSTRTAAVA…LPPRRVDAVA (62 aa)), are a transit peptide targeting the chloroplast. Residues 7 to 18 (AAVAASASPASP) show a composition bias toward low complexity. Y184 functions as the Proton donor in the catalytic mechanism. Position 237 (R237) interacts with NAD(+). The Proton acceptor role is filled by K255. E327, D328, and D351 together coordinate a divalent metal cation. Residue D351 coordinates NAD(+). 380–396 (LFLGAGEAGTGIAELIA) provides a ligand contact to NADP(+). N492 contributes to the NAD(+) binding site.

It belongs to the malic enzymes family. Homotetramer. It depends on Mg(2+) as a cofactor. The cofactor is Mn(2+).

Its subcellular location is the plastid. The protein resides in the chloroplast. It carries out the reaction (S)-malate + NADP(+) = pyruvate + CO2 + NADPH. The enzyme catalyses oxaloacetate + H(+) = pyruvate + CO2. Its pathway is photosynthesis; C4 acid pathway. The chloroplastic ME isoform decarboxylates malate shuttled from neighboring mesophyll cells. The CO(2) released is then refixed by ribulose-bisphosphate carboxylase. This pathway eliminates the photorespiratory loss of CO(2) that occurs in most plants. The protein is NADP-dependent malic enzyme, chloroplastic (MOD1) of Zea mays (Maize).